Consider the following 588-residue polypeptide: Probable cytochrome c oxidase subunit 1-beta (588 aa).

Positions 1 to 26 (MTATPAQRRPALPATRPYPARHGPKG) are disordered. Residues 43-63 (VLYLVSATGFFLIGGLLALLM) form a helical membrane-spanning segment. H87 provides a ligand contact to Fe(II)-heme a. A run of 6 helical transmembrane segments spans residues 90 to 110 (IMLLFYATPVVFGFANAVLPL), 128 to 148 (WLYLFGATMATAGFLTPGGAA), 171 to 191 (LWILGLAVSGLGTILGAVNMI), 214 to 234 (ILITSILVLLAFPILTAALMA), 259 to 279 (LFWFFGHPEVYIIALPFFGII), and 291 to 311 (IFGYTALVYATLAIAALSMAV). The Cu cation site is built by H265 and Y269. The 1'-histidyl-3'-tyrosine (His-Tyr) cross-link spans 265-269 (HPEVY). 2 residues coordinate Cu cation: H314 and H315. The next 2 membrane-spanning stretches (helical) occupy residues 320 to 340 (GAVLLPFFSMMTFLIAVPTGV) and 360 to 380 (MLFAIGFIVTFLLGGLSGVIL). H398 is a heme a3 binding site. 3 consecutive transmembrane segments (helical) span residues 399–419 (FHYVLFGTIVFATFAGIYFWF), 434–454 (LHFWTTFLGFHLTFLVQHWLG), and 477–497 (VSTIGSFLLGISMVTFVWNGF). H400 contributes to the Fe(II)-heme a binding site. The disordered stretch occupies residues 557–588 (AEAHAGRRAGHGAGAELSVPSTVATKDDDHTS).

It belongs to the heme-copper respiratory oxidase family. Associates with subunits II, III and IV to form cytochrome c oxidase. It depends on Cu(2+) as a cofactor. The cofactor is heme.

The protein resides in the cell membrane. The catalysed reaction is 4 Fe(II)-[cytochrome c] + O2 + 8 H(+)(in) = 4 Fe(III)-[cytochrome c] + 2 H2O + 4 H(+)(out). Its pathway is energy metabolism; oxidative phosphorylation. Cytochrome c oxidase is the component of the respiratory chain that catalyzes the reduction of oxygen to water. Subunits 1-3 form the functional core of the enzyme complex. CO I is the catalytic subunit of the enzyme. Electrons originating in cytochrome c are transferred via the copper A center of subunit 2 and heme A of subunit 1 to the bimetallic center formed by heme A3 and copper B. The chain is Probable cytochrome c oxidase subunit 1-beta (ctaD2) from Nocardia farcinica (strain IFM 10152).